A 1082-amino-acid chain; its full sequence is DNA-directed RNA polymerase subunit beta (1082 aa).

Belongs to the RNA polymerase beta chain family. As to quaternary structure, in plastids the minimal PEP RNA polymerase catalytic core is composed of four subunits: alpha, beta, beta', and beta''. When a (nuclear-encoded) sigma factor is associated with the core the holoenzyme is formed, which can initiate transcription.

It localises to the plastid. The protein resides in the chloroplast. The enzyme catalyses RNA(n) + a ribonucleoside 5'-triphosphate = RNA(n+1) + diphosphate. Functionally, DNA-dependent RNA polymerase catalyzes the transcription of DNA into RNA using the four ribonucleoside triphosphates as substrates. In Euglena gracilis, this protein is DNA-directed RNA polymerase subunit beta.